A 321-amino-acid chain; its full sequence is LIMR family protein SELMODRAFT_432210 (321 aa).

Helical transmembrane passes span 28 to 48 (KQLW…VIPF), 116 to 133 (CFSL…LDLW), 139 to 159 (LCVF…FGGV), 240 to 260 (LVFG…ILVF), and 284 to 304 (LLGT…VISG).

The protein belongs to the LIMR family.

It localises to the membrane. The chain is LIMR family protein SELMODRAFT_432210 from Selaginella moellendorffii (Spikemoss).